Here is a 217-residue protein sequence, read N- to C-terminus: Probable lipoprotein CPn_0875/CP_0994/CPj0875/CpB0904 (217 aa).

Positions 1-21 (MKRVIYKTIFCGLTLLTSLSS) are cleaved as a signal peptide. Cys22 carries the N-palmitoyl cysteine lipid modification. A lipid anchor (S-diacylglycerol cysteine) is attached at Cys22.

This sequence belongs to the chlamydial CPn_0875/CT_734/TC_0107 family.

Its subcellular location is the cell membrane. The protein is Probable lipoprotein CPn_0875/CP_0994/CPj0875/CpB0904 of Chlamydia pneumoniae (Chlamydophila pneumoniae).